The following is a 747-amino-acid chain: Catalase-peroxidase (747 aa).

A signal peptide spans 1–27 (MRKFSVSKVALLAATMAPALLPAAARA). A cross-link (tryptophyl-tyrosyl-methioninium (Trp-Tyr) (with M-264)) is located at residues 116–238 (WHSAGTYRTA…LAAVQMGLIY (123 aa)). H117 acts as the Proton acceptor in catalysis. A cross-link (tryptophyl-tyrosyl-methioninium (Tyr-Met) (with W-116)) is located at residues 238–264 (YVNPEGPNGNPDPLLAAKDIRETFGRM). H279 lines the heme b pocket.

This sequence belongs to the peroxidase family. Peroxidase/catalase subfamily. In terms of assembly, homodimer or homotetramer. Heme b serves as cofactor. Post-translationally, formation of the three residue Trp-Tyr-Met cross-link is important for the catalase, but not the peroxidase activity of the enzyme.

The catalysed reaction is H2O2 + AH2 = A + 2 H2O. It catalyses the reaction 2 H2O2 = O2 + 2 H2O. Functionally, bifunctional enzyme with both catalase and broad-spectrum peroxidase activity. The chain is Catalase-peroxidase from Novosphingobium aromaticivorans (strain ATCC 700278 / DSM 12444 / CCUG 56034 / CIP 105152 / NBRC 16084 / F199).